Here is a 622-residue protein sequence, read N- to C-terminus: MQLYDVVIIGGGHAGCEAASASARSGACTALVTHKISALGTMSCNPAIGGLGKGHLVREIDALDGLMGRAADIAGIQFRLLNRRKGPAVRGPRTQADRKLYKKAIQKFLQEQDNLILIEDEAVDLIVKDNCVSGVVLKKQGELFSGAVVLTTGTFLNGLIHIGDKTWAAGRMGEHSSVQLAERLKKYDINLGRLKTGTPARLSKKTINWNCLSKQKADEDPVPFSLLTEKIEQPQIECAITRTNTQTHQIIRENIHRSALYSGMIEGLGPRYCPSVEDKIVKFGERDGHQIFLEPEGLNDDTIYPNGLSTSLPEDVQVALLRTIEGLESVKILQPGYAIEYDFVNPQQLTKTLELRSLPGLFLAGQINGTTGYEEAAAQGLLAGLNAARKVGGLNEIIISRSTAYIGVMVDDLVSRGVSEPYRMFTSRAEFRLSLRSDNADARLTPLAQQWGIVSQKRWDLYQQKQQRLDQARSICQKLFLTPNQASAHGLQVNHDGIRRSAYDLLAYPHMSIERLSHFWQQLQSIDPKTVESLEIEAQYAVYLEKQAQDISALQRDERLEIPSSLDFQTISGLSNELKTKIQKISPRSIADAQKIDGMTPAALSLIITYIQRQRREKAESA.

10–15 serves as a coordination point for FAD; the sequence is GGGHAG. 269–283 lines the NAD(+) pocket; sequence GPRYCPSVEDKIVKF.

This sequence belongs to the MnmG family. In terms of assembly, homodimer. Heterotetramer of two MnmE and two MnmG subunits. FAD serves as cofactor.

It is found in the cytoplasm. Functionally, NAD-binding protein involved in the addition of a carboxymethylaminomethyl (cmnm) group at the wobble position (U34) of certain tRNAs, forming tRNA-cmnm(5)s(2)U34. The polypeptide is tRNA uridine 5-carboxymethylaminomethyl modification enzyme MnmG (Bartonella quintana (strain Toulouse) (Rochalimaea quintana)).